The following is a 232-amino-acid chain: MDYIKGIAFDLYGTLFDVHSVVGRCDEAFPGRGREISALWRQKQLEYTWLRSLMNRYVNFQQATEDALRFTCRHLGLDLDARTRSTLCDAYLRLAPFSEVPDSLRELKRRGLKLAILSNGSPQSIDAVVSHAGLRDGFDHLLSVDPVQVYKPDNRVYELAEQALGLDRSAILFVSSNAWDATGARYFGFPTCWINRTGNVFEEMGQTPDWEVTSLRAVVELFETAAGKAEKG.

D10 (nucleophile) is an active-site residue. Residues L11 to Y12, R41, and S118 to N119 each bind an (S)-2-haloacid. Positions S175–D180 are important for catalytic activity.

Belongs to the HAD-like hydrolase superfamily. S-2-haloalkanoic acid dehalogenase family. Homodimer.

It carries out the reaction an (S)-2-haloacid + H2O = a (2R)-2-hydroxycarboxylate + a halide anion + H(+). It catalyses the reaction (S)-2-chloropropanoate + H2O = (R)-lactate + chloride + H(+). Its function is as follows. Catalyzes the hydrolytic dehalogenation of small (S)-2-haloalkanoic acids to yield the corresponding (R)-2-hydroxyalkanoic acids. Acts on acids of short chain lengths, C(2) to C(4), with inversion of configuration at C-2. Active with 2-halogenated carboxylic acids and converts only the S-isomer (or L-isomer) of 2-chloropropionic acid with inversion of configuration to produce R-lactate (or D-isomer). This is (S)-2-haloacid dehalogenase from Pseudomonas sp. (strain YL).